The chain runs to 622 residues: DNA mismatch repair protein MutL (622 aa).

The protein belongs to the DNA mismatch repair MutL/HexB family.

This protein is involved in the repair of mismatches in DNA. It is required for dam-dependent methyl-directed DNA mismatch repair. May act as a 'molecular matchmaker', a protein that promotes the formation of a stable complex between two or more DNA-binding proteins in an ATP-dependent manner without itself being part of a final effector complex. The chain is DNA mismatch repair protein MutL from Prosthecochloris aestuarii (strain DSM 271 / SK 413).